A 286-amino-acid chain; its full sequence is ATP synthase gamma chain (286 aa).

The protein belongs to the ATPase gamma chain family. As to quaternary structure, F-type ATPases have 2 components, CF(1) - the catalytic core - and CF(0) - the membrane proton channel. CF(1) has five subunits: alpha(3), beta(3), gamma(1), delta(1), epsilon(1). CF(0) has three main subunits: a, b and c.

It is found in the cell inner membrane. Functionally, produces ATP from ADP in the presence of a proton gradient across the membrane. The gamma chain is believed to be important in regulating ATPase activity and the flow of protons through the CF(0) complex. This Pseudomonas fluorescens (strain SBW25) protein is ATP synthase gamma chain.